We begin with the raw amino-acid sequence, 220 residues long: MAKILAVDDEKDILVLIQNILRRDQHQVDILDHVHGQPPDVFQGYDLILLDVMMPDIDGFELCKQIRPLVDCPILFLTAKTEEEAIVKGLITGGDDYITKPFGVRELSARVNAHLRRERRDKHQSKRVISGFLFHFDSKEVFINNNKLNLTKNEYKICEFLAQHKGRTFSREQIYEEIYGLEGNALYSTITEFIRTIRKKCKEHNADPIKTVWGVGYKWE.

The Response regulatory domain maps to 3 to 115 (KILAVDDEKD…ELSARVNAHL (113 aa)). The residue at position 51 (aspartate 51) is a 4-aspartylphosphate. Residues 124–220 (QSKRVISGFL…TVWGVGYKWE (97 aa)) constitute a DNA-binding region (ompR/PhoB-type).

Phosphorylated by SpaK.

Its subcellular location is the cytoplasm. Functionally, member of the two-component regulatory system SpaK/SpaR involved in the regulation of the biosynthesis of lantibiotic subtilin. SpaR may function as a regulatory protein. The sequence is that of Transcriptional regulatory protein SpaR (spaR) from Bacillus subtilis.